The chain runs to 480 residues: Probable WRKY transcription factor 61 (480 aa).

The disordered stretch occupies residues 30–108 (NQLMAKHNEP…RNYDDNEKSS (79 aa)). Basic and acidic residues-rich tracts occupy residues 57 to 66 (REKVNEREEL) and 84 to 106 (NKEE…DNEK). Positions 185–251 (CETPTMNDGC…YEGTHNHPLP (67 aa)) form a DNA-binding region, WRKY.

The protein localises to the nucleus. Its function is as follows. Transcription factor. Interacts specifically with the W box (5'-(T)TGAC[CT]-3'), a frequently occurring elicitor-responsive cis-acting element. In Arabidopsis thaliana (Mouse-ear cress), this protein is Probable WRKY transcription factor 61 (WRKY61).